Reading from the N-terminus, the 184-residue chain is Cytidylate kinase (184 aa).

An ATP-binding site is contributed by 8-16 (GQPGSGKTT).

It belongs to the cytidylate kinase family. Type 2 subfamily.

It localises to the cytoplasm. It carries out the reaction CMP + ATP = CDP + ADP. It catalyses the reaction dCMP + ATP = dCDP + ADP. The protein is Cytidylate kinase of Pyrobaculum arsenaticum (strain DSM 13514 / JCM 11321 / PZ6).